The sequence spans 256 residues: Uridylate kinase (256 aa).

10–13 provides a ligand contact to ATP; the sequence is KLSG. G52 is a binding site for UMP. 2 residues coordinate ATP: G53 and R57. UMP is bound by residues D72 and 134–141; that span reads NGQPFLTT. ATP contacts are provided by Y168 and D171.

The protein belongs to the UMP kinase family. Homohexamer.

The protein localises to the cytoplasm. It carries out the reaction UMP + ATP = UDP + ADP. Its pathway is pyrimidine metabolism; CTP biosynthesis via de novo pathway; UDP from UMP (UMPK route): step 1/1. Inhibited by UTP. In terms of biological role, catalyzes the reversible phosphorylation of UMP to UDP. This chain is Uridylate kinase, found in Frankia alni (strain DSM 45986 / CECT 9034 / ACN14a).